Reading from the N-terminus, the 140-residue chain is uncharacterized protein (140 aa).

This is an uncharacterized protein from Escherichia coli O157:H7.